The following is a 426-amino-acid chain: Probable imidazolonepropionase (426 aa).

Positions 159 and 192 each coordinate 4-imidazolone-5-propanoate. Position 159 (Tyr159) interacts with N-formimidoyl-L-glutamate. Position 260 (His260) interacts with Fe(3+). Position 260 (His260) interacts with Zn(2+). 4-imidazolone-5-propanoate is bound at residue Glu263. Asp334 contributes to the Fe(3+) binding site. Asp334 provides a ligand contact to Zn(2+). Asn336 contacts N-formimidoyl-L-glutamate.

The protein belongs to the metallo-dependent hydrolases superfamily. HutI family. Requires Zn(2+) as cofactor. Fe(3+) is required as a cofactor.

The enzyme catalyses 4-imidazolone-5-propanoate + H2O = N-formimidoyl-L-glutamate. It participates in amino-acid degradation; L-histidine degradation into L-glutamate; N-formimidoyl-L-glutamate from L-histidine: step 3/3. The polypeptide is Probable imidazolonepropionase (AMDHD1) (Bos taurus (Bovine)).